Consider the following 411-residue polypeptide: Growth-regulating factor 7 (411 aa).

Positions 38–73 (PFTPTQWMELEHQALIYKHIVANAPVPAGLLLPIRR) constitute a QLQ domain. The WRC domain maps to 108–152 (DSEPGRCRRTDGKKWRCSRDAVVDQKYCERHINRGRHRSRKHVEG). 2 short sequence motifs (bipartite nuclear localization signal) span residues 113-123 (RCRRTDGKKWR) and 141-148 (RGRHRSRK). Residues 333–369 (FFTNTSSASDDKGKSRHPPSLNLLADGHTTSPQLQSP) are disordered. The span at 360-369 (HTTSPQLQSP) shows a compositional bias: polar residues.

Belongs to the GRF family.

The protein localises to the nucleus. Functionally, transcription activator that plays a regulatory role in gibberellin-induced stem elongation. This is Growth-regulating factor 7 (GRF7) from Oryza sativa subsp. japonica (Rice).